Consider the following 566-residue polypeptide: Glucose starvation modulator protein 1 (566 aa).

The zn(2)-C6 fungal-type DNA-binding region spans 20 to 48 (CVFCHQKHLQCSNERPCKNCVKRNIAHGC). Disordered stretches follow at residues 65–93 (PGAV…PMDS) and 250–270 (KQAS…NTLS). Positions 83–93 (PVSTSVSPMDS) are enriched in polar residues. Residues 253-270 (SPSPSNTSTSENNTNTLS) show a composition bias toward low complexity.

The protein belongs to the ERT1/acuK family.

The protein localises to the nucleus. In terms of biological role, transcription factor which regulates nonfermentable carbon utilization. The protein is Glucose starvation modulator protein 1 (ZCF23) of Candida albicans (strain SC5314 / ATCC MYA-2876) (Yeast).